A 269-amino-acid chain; its full sequence is MKIGSKEFNIGERTYIMGILNFTPDSFSDGGKFNDIDVAVKHVKEMIDNGADIIDVGGESTRPGYEIVSEEEEISRVVPIIKAIKEDFDIPVSIDTYKAKVAEQAIEAGANLINDIWGFKKDKDMAKVAAKYNVPCCLMHNRDNTEYKNLMEDILNDLKECINIAKDAGVKDENIILDPGIGFGKTYEQNLEAMNNLERIKELGYPILLGTSRKSMIGLALNLPVEERIEGTVATTVIGIMKDACDFVRVHDVLENSRAAKMTDIIVRR.

The Pterin-binding domain occupies 14-261 (TYIMGILNFT…DVLENSRAAK (248 aa)). Position 21 (Asn21) interacts with Mg(2+). Residues Thr61, Asp95, Asn114, Asp178, Lys214, and 249–251 (RVH) each bind (7,8-dihydropterin-6-yl)methyl diphosphate.

The protein belongs to the DHPS family. Mg(2+) serves as cofactor.

The enzyme catalyses (7,8-dihydropterin-6-yl)methyl diphosphate + 4-aminobenzoate = 7,8-dihydropteroate + diphosphate. The protein operates within cofactor biosynthesis; tetrahydrofolate biosynthesis; 7,8-dihydrofolate from 2-amino-4-hydroxy-6-hydroxymethyl-7,8-dihydropteridine diphosphate and 4-aminobenzoate: step 1/2. Its function is as follows. Catalyzes the condensation of para-aminobenzoate (pABA) with 6-hydroxymethyl-7,8-dihydropterin diphosphate (DHPt-PP) to form 7,8-dihydropteroate (H2Pte), the immediate precursor of folate derivatives. The protein is Dihydropteroate synthase of Clostridium beijerinckii (strain ATCC 51743 / NCIMB 8052) (Clostridium acetobutylicum).